Consider the following 454-residue polypeptide: Allantoinase (454 aa).

His-60, His-62, Lys-147, His-183, His-239, and Asp-312 together coordinate Zn(2+). Lys-147 carries the post-translational modification N6-carboxylysine.

This sequence belongs to the metallo-dependent hydrolases superfamily. Allantoinase family. In terms of assembly, homotetramer. Zn(2+) serves as cofactor. Carboxylation allows a single lysine to coordinate two zinc ions.

The enzyme catalyses (S)-allantoin + H2O = allantoate + H(+). The protein operates within nitrogen metabolism; (S)-allantoin degradation; allantoate from (S)-allantoin: step 1/1. Its function is as follows. Catalyzes the conversion of allantoin (5-ureidohydantoin) to allantoic acid by hydrolytic cleavage of the five-member hydantoin ring. The polypeptide is Allantoinase (Rubrobacter xylanophilus (strain DSM 9941 / JCM 11954 / NBRC 16129 / PRD-1)).